Reading from the N-terminus, the 148-residue chain is MNRVAVIHGPNLNLLGRREPEVYGTKSLENINKEIEKRANNLKIEVDIFQSNHEGEIIDFIHDNYKALSGIIINPGGLTHYSIALRDALAAVRLPVVEVHISNIHKREDFRHRSVIASVAVGQITGLGTEGYLYALEAIVNIIKKGSY.

The Proton acceptor role is filled by Tyr-23. 3 residues coordinate substrate: Asn-74, His-80, and Asp-87. The active-site Proton donor is His-100. Substrate is bound by residues 101–102 and Arg-111; that span reads IS.

Belongs to the type-II 3-dehydroquinase family. In terms of assembly, homododecamer.

The catalysed reaction is 3-dehydroquinate = 3-dehydroshikimate + H2O. It participates in metabolic intermediate biosynthesis; chorismate biosynthesis; chorismate from D-erythrose 4-phosphate and phosphoenolpyruvate: step 3/7. Functionally, catalyzes a trans-dehydration via an enolate intermediate. The polypeptide is 3-dehydroquinate dehydratase (Halothermothrix orenii (strain H 168 / OCM 544 / DSM 9562)).